A 293-amino-acid chain; its full sequence is Protease HtpX (293 aa).

2 consecutive transmembrane segments (helical) span residues 4-24 and 34-54; these read IALF…VLSL and GLMI…LLMS. A Zn(2+)-binding site is contributed by His139. Glu140 is an active-site residue. His143 serves as a coordination point for Zn(2+). The next 2 helical transmembrane spans lie at 158–178 and 193–213; these read IVNT…SGFL and LVYF…ASII. Glu222 serves as a coordination point for Zn(2+).

The protein belongs to the peptidase M48B family. Zn(2+) serves as cofactor.

Its subcellular location is the cell inner membrane. This chain is Protease HtpX, found in Pectobacterium carotovorum subsp. carotovorum (strain PC1).